A 277-amino-acid polypeptide reads, in one-letter code: Large ribosomal subunit protein uL2 (277 aa).

The segment at 225–277 is disordered; the sequence is MNPVDHPHGGGEGKTSGGRNSVTPWGVPTKGKKTRKRGKHSDKYIKVSSVRKR. Residues 254 to 264 are compositionally biased toward basic residues; sequence KGKKTRKRGKH.

It belongs to the universal ribosomal protein uL2 family. Part of the 50S ribosomal subunit. Forms a bridge to the 30S subunit in the 70S ribosome.

In terms of biological role, one of the primary rRNA binding proteins. Required for association of the 30S and 50S subunits to form the 70S ribosome, for tRNA binding and peptide bond formation. It has been suggested to have peptidyltransferase activity; this is somewhat controversial. Makes several contacts with the 16S rRNA in the 70S ribosome. This Anaplasma marginale (strain Florida) protein is Large ribosomal subunit protein uL2.